A 330-amino-acid chain; its full sequence is Ketol-acid reductoisomerase (NADP(+)) (330 aa).

The region spanning 3 to 184 is the KARI N-terminal Rossmann domain; it reads LPVYYDKDID…GGGRMGVLET (182 aa). Residues 26 to 29, Ser-52, and Ser-54 contribute to the NADP(+) site; that span reads YGVQ. His-109 is an active-site residue. Gly-135 contributes to the NADP(+) binding site. The 145-residue stretch at 185 to 329 folds into the KARI C-terminal knotted domain; the sequence is SFKEECESDL…EILRAPFNHK (145 aa). 4 residues coordinate Mg(2+): Asp-193, Glu-197, Glu-229, and Glu-233. A substrate-binding site is contributed by Ser-254.

This sequence belongs to the ketol-acid reductoisomerase family. It depends on Mg(2+) as a cofactor.

It carries out the reaction (2R)-2,3-dihydroxy-3-methylbutanoate + NADP(+) = (2S)-2-acetolactate + NADPH + H(+). It catalyses the reaction (2R,3R)-2,3-dihydroxy-3-methylpentanoate + NADP(+) = (S)-2-ethyl-2-hydroxy-3-oxobutanoate + NADPH + H(+). It functions in the pathway amino-acid biosynthesis; L-isoleucine biosynthesis; L-isoleucine from 2-oxobutanoate: step 2/4. The protein operates within amino-acid biosynthesis; L-valine biosynthesis; L-valine from pyruvate: step 2/4. Functionally, involved in the biosynthesis of branched-chain amino acids (BCAA). Catalyzes an alkyl-migration followed by a ketol-acid reduction of (S)-2-acetolactate (S2AL) to yield (R)-2,3-dihydroxy-isovalerate. In the isomerase reaction, S2AL is rearranged via a Mg-dependent methyl migration to produce 3-hydroxy-3-methyl-2-ketobutyrate (HMKB). In the reductase reaction, this 2-ketoacid undergoes a metal-dependent reduction by NADPH to yield (R)-2,3-dihydroxy-isovalerate. This chain is Ketol-acid reductoisomerase (NADP(+)), found in Helicobacter pylori (strain J99 / ATCC 700824) (Campylobacter pylori J99).